The sequence spans 122 residues: Large ribosomal subunit protein uL14 (122 aa).

Belongs to the universal ribosomal protein uL14 family. In terms of assembly, part of the 50S ribosomal subunit. Forms a cluster with proteins L3 and L19. In the 70S ribosome, L14 and L19 interact and together make contacts with the 16S rRNA in bridges B5 and B8.

Functionally, binds to 23S rRNA. Forms part of two intersubunit bridges in the 70S ribosome. This is Large ribosomal subunit protein uL14 from Cutibacterium acnes (strain DSM 16379 / KPA171202) (Propionibacterium acnes).